The primary structure comprises 376 residues: Actin-related protein T1 (376 aa).

Belongs to the actin family.

The protein resides in the cytoplasm. The protein localises to the cytoskeleton. It localises to the nucleus. Its subcellular location is the cytoplasmic vesicle. It is found in the secretory vesicle. The protein resides in the acrosome. Its function is as follows. Negatively regulates the Hedgehog (SHH) signaling. Binds to the promoter of the SHH signaling mediator, GLI1, and inhibits its expression. The polypeptide is Actin-related protein T1 (Actrt1) (Rattus norvegicus (Rat)).